The chain runs to 380 residues: Cytochrome b (380 aa).

4 helical membrane passes run 33 to 53 (FGSL…FLAM), 77 to 98 (WLIR…YLHV), 113 to 133 (WNIG…GYVL), and 178 to 198 (FFAF…IHLL). Heme b contacts are provided by His-83 and His-97. The heme b site is built by His-182 and His-196. Position 201 (His-201) interacts with a ubiquinone. 4 consecutive transmembrane segments (helical) span residues 226 to 246 (YKDL…ALFS), 288 to 308 (LGGV…PMLH), 320 to 340 (LSQI…WIGG), and 347 to 367 (FVLI…IALP).

This sequence belongs to the cytochrome b family. As to quaternary structure, the cytochrome bc1 complex contains 3 respiratory subunits (MT-CYB, CYC1 and UQCRFS1), 2 core proteins (UQCRC1 and UQCRC2) and probably 6 low-molecular weight proteins. Requires heme b as cofactor.

It is found in the mitochondrion inner membrane. Functionally, component of the ubiquinol-cytochrome c reductase complex (complex III or cytochrome b-c1 complex) that is part of the mitochondrial respiratory chain. The b-c1 complex mediates electron transfer from ubiquinol to cytochrome c. Contributes to the generation of a proton gradient across the mitochondrial membrane that is then used for ATP synthesis. The sequence is that of Cytochrome b (mt-cyb) from Acipenser persicus (Persian sturgeon).